We begin with the raw amino-acid sequence, 547 residues long: CTP synthase (547 aa).

The amidoligase domain stretch occupies residues 1 to 265 (MTKFVFVTGG…DRIVCEKLAL (265 aa)). Residue serine 13 participates in CTP binding. Serine 13 provides a ligand contact to UTP. ATP is bound by residues 14 to 19 (SLGKGI) and aspartate 71. Residues aspartate 71 and glutamate 139 each contribute to the Mg(2+) site. CTP-binding positions include 146–148 (DIE), 186–191 (KTKPTQ), and lysine 222. UTP contacts are provided by residues 186–191 (KTKPTQ) and lysine 222. A Glutamine amidotransferase type-1 domain is found at 290 to 542 (TIGMVGKYVD…IKAALAHKHA (253 aa)). Glycine 351 is an L-glutamine binding site. Cysteine 378 serves as the catalytic Nucleophile; for glutamine hydrolysis. L-glutamine contacts are provided by residues 379 to 382 (LGMQ), glutamate 402, and arginine 468. Residues histidine 515 and glutamate 517 contribute to the active site.

It belongs to the CTP synthase family. In terms of assembly, homotetramer.

The catalysed reaction is UTP + L-glutamine + ATP + H2O = CTP + L-glutamate + ADP + phosphate + 2 H(+). It catalyses the reaction L-glutamine + H2O = L-glutamate + NH4(+). The enzyme catalyses UTP + NH4(+) + ATP = CTP + ADP + phosphate + 2 H(+). It functions in the pathway pyrimidine metabolism; CTP biosynthesis via de novo pathway; CTP from UDP: step 2/2. Its activity is regulated as follows. Allosterically activated by GTP, when glutamine is the substrate; GTP has no effect on the reaction when ammonia is the substrate. The allosteric effector GTP functions by stabilizing the protein conformation that binds the tetrahedral intermediate(s) formed during glutamine hydrolysis. Inhibited by the product CTP, via allosteric rather than competitive inhibition. Functionally, catalyzes the ATP-dependent amination of UTP to CTP with either L-glutamine or ammonia as the source of nitrogen. Regulates intracellular CTP levels through interactions with the four ribonucleotide triphosphates. This is CTP synthase from Janthinobacterium sp. (strain Marseille) (Minibacterium massiliensis).